A 64-amino-acid chain; its full sequence is Conotoxin Im11.4 (64 aa).

The signal sequence occupies residues 1-26; that stretch reads MMFRLTSVSCILLVIAFLNLVGLTNA. 4 disulfides stabilise this stretch: Cys27–Cys41, Cys34–Cys46, Cys40–Cys50, and Cys45–Cys54. His57 bears the Histidine amide mark. A propeptide spanning residues 61–64 is cleaved from the precursor; sequence ATFQ.

This sequence belongs to the conotoxin I2 superfamily. In terms of tissue distribution, expressed by the venom duct.

The protein resides in the secreted. The protein is Conotoxin Im11.4 of Conus imperialis (Imperial cone).